Here is a 351-residue protein sequence, read N- to C-terminus: Magnesium-protoporphyrin IX monomethyl ester [oxidative] cyclase 1 (351 aa).

Belongs to the AcsF family. Requires Fe cation as cofactor.

It catalyses the reaction Mg-protoporphyrin IX 13-monomethyl ester + 3 NADPH + 3 O2 + 2 H(+) = 3,8-divinyl protochlorophyllide a + 3 NADP(+) + 5 H2O. It participates in porphyrin-containing compound metabolism; chlorophyll biosynthesis (light-independent). Functionally, catalyzes the formation of the isocyclic ring in chlorophyll biosynthesis. Mediates the cyclase reaction, which results in the formation of divinylprotochlorophyllide (Pchlide) characteristic of all chlorophylls from magnesium-protoporphyrin IX 13-monomethyl ester (MgPMME). This chain is Magnesium-protoporphyrin IX monomethyl ester [oxidative] cyclase 1, found in Nostoc sp. (strain PCC 7120 / SAG 25.82 / UTEX 2576).